A 116-amino-acid polypeptide reads, in one-letter code: MRHRHGYRKLGRTSSHRAALLKNLSISLIEHGKIETTVEKAKELRSYVEKLITVAGKNDSNAHKAVFAALQSKEATKKLVNEIAPKYVERAGGYTRIIRTRIRRGDATTMAFIELV.

Belongs to the bacterial ribosomal protein bL17 family. In terms of assembly, part of the 50S ribosomal subunit. Contacts protein L32.

The chain is Large ribosomal subunit protein bL17 from Sulfurimonas denitrificans (strain ATCC 33889 / DSM 1251) (Thiomicrospira denitrificans (strain ATCC 33889 / DSM 1251)).